A 705-amino-acid polypeptide reads, in one-letter code: Choline transporter-like protein 2 (705 aa).

Topologically, residues 1–33 (MGKDSQHYYGKHGTPQKYDPTFKGPIYNRGCTD) are cytoplasmic. Position 14 is a phosphothreonine (T14). A helical membrane pass occupies residues 34–54 (IICCVLLFLAIVGYVAVGIIA). Residues 55-232 (WTHGDPRKVI…QIFEDYTVSW (178 aa)) lie on the Extracellular side of the membrane. 2 N-linked (GlcNAc...) asparagine glycosylation sites follow: N187 and N200. The helical transmembrane segment at 233–253 (YWIVIGLVIAMLLSLMFIVLL) threads the bilayer. Residues 254–256 (RFL) lie on the Cytoplasmic side of the membrane. A helical membrane pass occupies residues 257 to 277 (AGVMVWVMIVMVILVLGYGIF). The Extracellular portion of the chain corresponds to 278–315 (HCYAEYSRLRGEAGSDVSLVDLGFQTDLRVYLHLRQTW). A helical transmembrane segment spans residues 316-336 (MAFMIILSILEVVIILLLIFL). Over 337 to 364 (RKRILIAIALIKEASRAVGHVMCSMLYP) the chain is Cytoplasmic. The helical transmembrane segment at 365 to 385 (LVTFFLLCLCIAYWASTSVFL) threads the bilayer. Topologically, residues 386–453 (STSNVAVYKI…LQIFNAFMFF (68 aa)) are extracellular. N416 carries N-linked (GlcNAc...) asparagine glycosylation. A helical membrane pass occupies residues 454–476 (WLANFVLALGQVTLAGAFASYYW). Residues 477–503 (AMRKPDDMPAFPLFSAFGRALRYHTGS) lie on the Cytoplasmic side of the membrane. Residues 504–524 (LAFGSLILAIVQIIRVMLEYL) traverse the membrane as a helical segment. Residues 525 to 562 (DQRLKAAQNKFAKFLMVCLKCCFWCLEKFIKFLNRNAY) are Extracellular-facing. Residues 563-583 (IMIAIYGTNFCTSARNAFFLL) traverse the membrane as a helical segment. Residues 584 to 598 (MRNIIRVAVLDKVTD) lie on the Cytoplasmic side of the membrane. A helical transmembrane segment spans residues 599–619 (FLFLLGKLLIVGSVGILAFFF). Residues 620 to 637 (FTHRIRIVQDTAPPLNYY) are Extracellular-facing. Residues 638–658 (WVPILTVIIGSYLIAHGFFSV) form a helical membrane-spanning segment. Residues 659–705 (YGMCVDTLFLCFLEDLERNDGSAERPYFMSSTLKKLLNKTNKKVAES) lie on the Cytoplasmic side of the membrane.

Belongs to the CTL (choline transporter-like) family. In terms of assembly, interacts with COCH. Post-translationally, N-glycosylated.

The protein localises to the cell membrane. It is found in the mitochondrion outer membrane. It catalyses the reaction choline(out) + n H(+)(in) = choline(in) + n H(+)(out). The catalysed reaction is ethanolamine(out) + n H(+)(in) = ethanolamine(in) + n H(+)(out). Functionally, exhibits choline transporter activity, as choline/H+ antiporter. Also acts as a low-affinity ethanolamine/H+ antiporter, regulating the supply of extracellular ethanolamine (Etn) for the CDP-Etn pathway, redistribute intracellular Etn and balance the CDP-Cho and CDP-Etn arms of the Kennedy pathway. The chain is Choline transporter-like protein 2 (Slc44a2) from Rattus norvegicus (Rat).